The sequence spans 365 residues: Chorismate synthase (365 aa).

Residues 41–51 (IQKELDRRRPG) show a composition bias toward basic and acidic residues. Positions 41-62 (IQKELDRRRPGQSEVSTPRSEA) are disordered. Arg-48 lines the NADP(+) pocket. FMN contacts are provided by residues 125 to 127 (RSS), Gly-285, 300 to 304 (KPTPS), and Arg-327.

This sequence belongs to the chorismate synthase family. FMNH2 serves as cofactor.

The enzyme catalyses 5-O-(1-carboxyvinyl)-3-phosphoshikimate = chorismate + phosphate. Its pathway is metabolic intermediate biosynthesis; chorismate biosynthesis; chorismate from D-erythrose 4-phosphate and phosphoenolpyruvate: step 7/7. In terms of biological role, catalyzes the anti-1,4-elimination of the C-3 phosphate and the C-6 proR hydrogen from 5-enolpyruvylshikimate-3-phosphate (EPSP) to yield chorismate, which is the branch point compound that serves as the starting substrate for the three terminal pathways of aromatic amino acid biosynthesis. This reaction introduces a second double bond into the aromatic ring system. The chain is Chorismate synthase from Methanosarcina acetivorans (strain ATCC 35395 / DSM 2834 / JCM 12185 / C2A).